Here is a 177-residue protein sequence, read N- to C-terminus: Apoptosis regulatory protein Siva (177 aa).

At tyrosine 34 the chain carries Phosphotyrosine; by ABL2. The interaction with BCL2L1 isoform Bcl-x(L) and inhibition of BCL2L1 anti-apoptotic activity stretch occupies residues 36 to 55 (REVFERTKQLLFQGAQAYRD).

As to quaternary structure, binds through its N-terminal region to the C-terminus of CD27 and to PXMP2/PMP22. Binds to the C-terminus of TNFRSF18/GITR. Binds to BCL2L1/BCLX isoform Bcl-x(L) but not to BAX. Zn(2+) is required as a cofactor. In post-ischemic kidney, found in cells lining the S3 segment of proximal tubules at 12 hours and 1 day post-ischemia. At five and seven days post-ischemia, found in epithelial cells of papillary proliferations in regenerating tubules.

It is found in the cytoplasm. The protein resides in the nucleus. Induces CD27-mediated apoptosis. Inhibits BCL2L1 isoform Bcl-x(L) anti-apoptotic activity. Inhibits activation of NF-kappa-B and promotes T-cell receptor-mediated apoptosis. In Rattus norvegicus (Rat), this protein is Apoptosis regulatory protein Siva (Siva1).